Reading from the N-terminus, the 458-residue chain is MVQISEVKGNSRDNRTAAHTHIKGLGLRPDGTAEVSGDGWVGQAAAREACGVVVDLIKAKKMAGRAVLLAGGPGTGKTALALAVSQELGTKVPFCPIVGSEIYSAEVKKTEALMENFRRAIGLRVRETKEVYEGEVTELTPQEAENPLGGYGRTISHLIIGLKSAKGTKKLRLDPSIYEAIQKERVTVGDVIYIEANTGACKRVGRSDAYATEFDLEAEEYVPVPKGEVHKKKEIVQDVTLHDLDIANARPQGGQDVMSMMGQLMKPKKTEITDKLRQEINKVVNRYIDQGVAELVPGVLFIDEVHMLDIECFTYLNRALESSISPIVILASNRGHTVIRGTDDISAAHGIPPDLLARLLIIPTHPYSPDEIKTIIRLRAKTEGLNITDPALDKVAEHGSKVSLRYALQLLTPASILARVNGRPGGIEEADVTECEDLFLDSKRSAAIVNQDSEKFLY.

The tract at residues 1–29 (MVQISEVKGNSRDNRTAAHTHIKGLGLRP) is disordered. ATP is bound at residue 71 to 78 (GGPGTGKT).

The protein belongs to the RuvB family. In terms of assembly, may form heterododecamers with RVB2. Component of the SWR1 chromatin remodeling complex, the INO80 chromatin remodeling complex, and of the R2TP complex.

Its subcellular location is the nucleus. The catalysed reaction is ATP + H2O = ADP + phosphate + H(+). Functionally, DNA helicase which participates in several chromatin remodeling complexes, including the SWR1 and the INO80 complexes. The SWR1 complex mediates the ATP-dependent exchange of histone H2A for the H2A variant HZT1 leading to transcriptional regulation of selected genes by chromatin remodeling. The INO80 complex remodels chromatin by shifting nucleosomes and is involved in DNA repair. Also involved in pre-rRNA processing. This is RuvB-like helicase 1 (rvb1) from Emericella nidulans (strain FGSC A4 / ATCC 38163 / CBS 112.46 / NRRL 194 / M139) (Aspergillus nidulans).